The following is a 373-amino-acid chain: Queuine tRNA-ribosyltransferase (373 aa).

Catalysis depends on aspartate 91, which acts as the Proton acceptor. Substrate-binding positions include 91-95 (DSGGF), aspartate 145, and glutamine 187. The tract at residues 245–251 (GVGTPED) is RNA binding. Aspartate 264 serves as the catalytic Nucleophile. The interval 269-273 (TRNAR) is RNA binding; important for wobble base 34 recognition. Residues cysteine 302, cysteine 304, cysteine 307, and histidine 333 each contribute to the Zn(2+) site.

Belongs to the queuine tRNA-ribosyltransferase family. Homodimer. Within each dimer, one monomer is responsible for RNA recognition and catalysis, while the other monomer binds to the replacement base PreQ1. The cofactor is Zn(2+).

The catalysed reaction is 7-aminomethyl-7-carbaguanine + guanosine(34) in tRNA = 7-aminomethyl-7-carbaguanosine(34) in tRNA + guanine. Its pathway is tRNA modification; tRNA-queuosine biosynthesis. Functionally, catalyzes the base-exchange of a guanine (G) residue with the queuine precursor 7-aminomethyl-7-deazaguanine (PreQ1) at position 34 (anticodon wobble position) in tRNAs with GU(N) anticodons (tRNA-Asp, -Asn, -His and -Tyr). Catalysis occurs through a double-displacement mechanism. The nucleophile active site attacks the C1' of nucleotide 34 to detach the guanine base from the RNA, forming a covalent enzyme-RNA intermediate. The proton acceptor active site deprotonates the incoming PreQ1, allowing a nucleophilic attack on the C1' of the ribose to form the product. After dissociation, two additional enzymatic reactions on the tRNA convert PreQ1 to queuine (Q), resulting in the hypermodified nucleoside queuosine (7-(((4,5-cis-dihydroxy-2-cyclopenten-1-yl)amino)methyl)-7-deazaguanosine). The sequence is that of Queuine tRNA-ribosyltransferase from Syntrophobacter fumaroxidans (strain DSM 10017 / MPOB).